A 206-amino-acid polypeptide reads, in one-letter code: uncharacterized protein (206 aa).

The N-terminal stretch at 1–18 (MSSLVLIPCALLTQGIYA) is a signal peptide.

This is an uncharacterized protein from Acanthamoeba polyphaga mimivirus (APMV).